Here is a 175-residue protein sequence, read N- to C-terminus: CEN-like protein 4 (175 aa).

It belongs to the phosphatidylethanolamine-binding protein family. Expressed in vegetative axillary meristems but not in the main shoot meristem.

The protein localises to the cytoplasm. Functionally, may form complexes with phosphorylated ligands by interfering with kinases and their effectors. The sequence is that of CEN-like protein 4 (CET4) from Nicotiana tabacum (Common tobacco).